A 312-amino-acid polypeptide reads, in one-letter code: Acetaldehyde dehydrogenase 4 (312 aa).

12–15 (SGNI) lines the NAD(+) pocket. The active-site Acyl-thioester intermediate is the Cys132. NAD(+)-binding positions include 163-171 (SAGPGTRAN) and Asn290.

This sequence belongs to the acetaldehyde dehydrogenase family.

The enzyme catalyses acetaldehyde + NAD(+) + CoA = acetyl-CoA + NADH + H(+). The chain is Acetaldehyde dehydrogenase 4 from Azotobacter vinelandii (strain DJ / ATCC BAA-1303).